A 195-amino-acid chain; its full sequence is PBAN-type neuropeptides (195 aa).

The first 33 residues, 1 to 33 (MIGFAVFSSFNRFTTIFVCVLLCVVYLLSYASG), serve as a signal peptide directing secretion. A propeptide spanning residues 34–63 (EYDGRDSSSGSNNDRAPSNEFGSCTDGKCI) is cleaved from the precursor. Residue L80 is modified to Leucine amide. Residues 86 to 117 (ADRKPEINSDIEAFANAFEEPHWAIVTIPETE) constitute a propeptide that is removed on maturation. A Pyrrolidone carboxylic acid modification is found at Q120. L128 is modified (leucine amide). Residues 131-153 (ESGEDYFSYGFPKDQEELYTEEQ) constitute a propeptide that is removed on maturation. 2 positions are modified to leucine amide: L163 and L175. A propeptide spanning residues 178 to 195 (QLHNIVDKPRQNFNDPRF) is cleaved from the precursor.

This sequence belongs to the pyrokinin family.

It is found in the secreted. Functionally, a hormone that controls sex pheromone production in females and pheromone responsiveness in male. Also mediates visceral muscle contractile activity (myotropic activity). In Apis mellifera (Honeybee), this protein is PBAN-type neuropeptides.